The sequence spans 411 residues: Lissencephaly-1 homolog (411 aa).

Positions 9–41 (QREELNQAIADYLGSNGYSSALEAFRKEADISG) constitute a LisH domain. Positions 56–83 (TSVIRLQKKVMELEAKLSEAEKEVIEGA) form a coiled coil. WD repeat units follow at residues 106 to 147 (GHRA…RSLK), 149 to 187 (HTSSVQDIAFDSQGKLLASCSADLSIKLWDFQQSYDCVK), 191 to 230 (GHDHNVSSVAFVPAGDYVLSASRDQTIKMWEVATGYCVKT), 233 to 272 (GHREWIRMVRVHMDGNIFASCSIDHSIRIWSINSRDCKAE), 275 to 334 (AHDH…CLFV), 337 to 376 (GHDNWVRELTFHPGGKYLVSASDDKTIRVWDLRNKRFMKT), and 379 to 411 (AHQHFCTSVDFHKKLPYVISGSVDNTVKVWECR).

It belongs to the WD repeat LIS1/nudF family.

It is found in the cytoplasm. The protein resides in the cytoskeleton. It localises to the microtubule organizing center. Its subcellular location is the centrosome. Functionally, positively regulates the activity of the minus-end directed microtubule motor protein dynein. May enhance dynein-mediated microtubule sliding by targeting dynein to the microtubule plus end. Required for several dynein- and microtubule-dependent processes. The polypeptide is Lissencephaly-1 homolog (Glossina morsitans morsitans (Savannah tsetse fly)).